Reading from the N-terminus, the 163-residue chain is MKELEKYNTCLKRIDEFSQNLGIKKKDRTIFKMKQSENENEKCLVLENGSFDSPEPWFVIDENDEIHTLLSLQSLKNILESLKQSQKENFELRLEKAIYQQIPVDFNDVWTVAMDEIKQKAQNGTMEVSIDLEKLISKIKQEHPNLFVDMQAMIERVNQNERL.

This sequence belongs to the UPF0763 family.

In Campylobacter jejuni subsp. jejuni serotype O:23/36 (strain 81-176), this protein is UPF0763 protein CJJ81176_1011.